Here is a 405-residue protein sequence, read N- to C-terminus: Riboflavin biosynthesis protein RibBA (405 aa).

A DHBP synthase region spans residues 1–205 (MEQIKLDSIA…IKDLIEYRLT (205 aa)). Residues 30–31 (RE), D35, 144–148 (RVGHT), and E168 each bind D-ribulose 5-phosphate. E31 provides a ligand contact to Mg(2+). H147 is a binding site for Mg(2+). The segment at 206–405 (HESLVKREIG…KMGHTILKKD (200 aa)) is GTP cyclohydrolase II. Residue 256–260 (RVHSS) participates in GTP binding. Residues C261, C272, and C274 each coordinate Zn(2+). GTP contacts are provided by residues Q277, 299-301 (EGR), and T321. The active-site Proton acceptor; for GTP cyclohydrolase activity is D333. Residue R335 is the Nucleophile; for GTP cyclohydrolase activity of the active site. Positions 356 and 361 each coordinate GTP.

The protein in the N-terminal section; belongs to the DHBP synthase family. In the C-terminal section; belongs to the GTP cyclohydrolase II family. Mg(2+) serves as cofactor. Mn(2+) is required as a cofactor. It depends on Zn(2+) as a cofactor.

It catalyses the reaction D-ribulose 5-phosphate = (2S)-2-hydroxy-3-oxobutyl phosphate + formate + H(+). The catalysed reaction is GTP + 4 H2O = 2,5-diamino-6-hydroxy-4-(5-phosphoribosylamino)-pyrimidine + formate + 2 phosphate + 3 H(+). It participates in cofactor biosynthesis; riboflavin biosynthesis; 2-hydroxy-3-oxobutyl phosphate from D-ribulose 5-phosphate: step 1/1. The protein operates within cofactor biosynthesis; riboflavin biosynthesis; 5-amino-6-(D-ribitylamino)uracil from GTP: step 1/4. Its function is as follows. Catalyzes the conversion of D-ribulose 5-phosphate to formate and 3,4-dihydroxy-2-butanone 4-phosphate. Functionally, catalyzes the conversion of GTP to 2,5-diamino-6-ribosylamino-4(3H)-pyrimidinone 5'-phosphate (DARP), formate and pyrophosphate. This is Riboflavin biosynthesis protein RibBA from Cytophaga hutchinsonii (strain ATCC 33406 / DSM 1761 / CIP 103989 / NBRC 15051 / NCIMB 9469 / D465).